Here is a 454-residue protein sequence, read N- to C-terminus: MINIGEVIETNDMVEKENLDVRTITLGISLLDCIDSDLAKVNENIYNKITTLAKNLVSTGKEIENNYCIPIVNKRISVTPIALVGGAACKSSEDFVTIAKTLDRAAKEVGVNFIGGYSALVSKGMTKADELLIKSIPQAMLETDLVCSSVNVGSTKTGINMDAVKLIGEMIKETAEVTKHLPVSGCAKFVVFCNAPDDNPFMAGAFHGVTEADAIINVGVSGPGVVKTALEKVRGENFEVLCETIKKTAFKVTRVGQLVAKEASKKLGVPFGIIDLSLAPTPAIGDSVADILCEIGLERAGAPGTTAALALLNDQVKKGGIMASSYVGGLSGAFIPVSEDQGMIDAVNDGALTLEKLEAMTCVCSVGLDMIAIPGDTKATTISGIIADEMAIGMINQKTTACRLLPAIGKDVGDVVEIGGLLGSAPVMPVNRFSCDAFVNRGGRIPAPIHSFKN.

This sequence belongs to the UPF0210 family. In terms of assembly, homodimer.

In Agathobacter rectalis (strain ATCC 33656 / DSM 3377 / JCM 17463 / KCTC 5835 / VPI 0990) (Eubacterium rectale), this protein is UPF0210 protein EUBREC_1565.